The chain runs to 341 residues: HTH-type transcriptional repressor PurR (341 aa).

One can recognise an HTH lacI-type domain in the interval 2-56 (ATIKDVAKRANVSTTTVSHVINKTRFVAEETRNAVWAAIKELHYSPSAVARSLKV). Positions 4–23 (IKDVAKRANVSTTTVSHVIN) form a DNA-binding region, H-T-H motif. The DNA-binding element occupies 48–56 (SAVARSLKV). 5 residues coordinate hypoxanthine: tyrosine 73, arginine 190, threonine 192, phenylalanine 221, and aspartate 275.

In terms of assembly, homodimer.

It participates in purine metabolism; purine nucleotide biosynthesis [regulation]. Is the main repressor of the genes involved in the de novo synthesis of purine nucleotides, regulating purB, purC, purEK, purF, purHD, purL, purMN and guaBA expression. PurR is allosterically activated to bind its cognate DNA by binding the purine corepressors, hypoxanthine or guanine, thereby effecting transcription repression. This chain is HTH-type transcriptional repressor PurR, found in Shigella sonnei (strain Ss046).